The following is a 286-amino-acid chain: Ribosomal RNA small subunit methyltransferase A (286 aa).

S-adenosyl-L-methionine-binding residues include asparagine 28, leucine 30, glycine 55, glutamate 77, aspartate 103, and asparagine 123.

It belongs to the class I-like SAM-binding methyltransferase superfamily. rRNA adenine N(6)-methyltransferase family. RsmA subfamily.

It is found in the cytoplasm. It catalyses the reaction adenosine(1518)/adenosine(1519) in 16S rRNA + 4 S-adenosyl-L-methionine = N(6)-dimethyladenosine(1518)/N(6)-dimethyladenosine(1519) in 16S rRNA + 4 S-adenosyl-L-homocysteine + 4 H(+). In terms of biological role, specifically dimethylates two adjacent adenosines (A1518 and A1519) in the loop of a conserved hairpin near the 3'-end of 16S rRNA in the 30S particle. May play a critical role in biogenesis of 30S subunits. The protein is Ribosomal RNA small subunit methyltransferase A of Rhodopseudomonas palustris (strain BisB18).